Consider the following 544-residue polypeptide: Neurofilament light polypeptide (544 aa).

Residue S2 is modified to N-acetylserine. The segment at 2 to 87 (SSYSYDPYYT…KIVRTQEKVQ (86 aa)) is head. The region spanning 84–394 (EKVQLQDLND…KLLEGEETRL (311 aa)) is the IF rod domain. Residues 88 to 119 (LQDLNDRFANFIERVHELEQRNKVLEAELLLL) are coil 1A. The segment at 120-132 (RQKHNEPSRLRDM) is linker 1. The coil 1B stretch occupies residues 133–228 (YEKEVRDVRL…KVHEEELSQL (96 aa)). Positions 229-246 (QSQVQYAQVSLEVEVAKP) are linker 12. The coil 2A stretch occupies residues 247-265 (DLSSALRDIRGQYEKLAAK). The interval 266-274 (NMQSAEEWF) is linker 2. The interval 275-390 (KSRFTVLTQS…AAYRKLLEGE (116 aa)) is coil 2B. The tract at residues 391–435 (ETRLSFSGVGAITSGYTQSAPVFGRSAYSLQSSSYMTSRAFPTYY) is tail, subdomain A. The segment at 391 to 544 (ETRLSFSGVG…EESEKKEKKK (154 aa)) is tail. A tail, subdomain B (acidic) region spans residues 436–544 (SSHVQEEQLD…EESEKKEKKK (109 aa)). A disordered region spans residues 450–544 (IESSRAEEAK…EESEKKEKKK (95 aa)). Residues 451-462 (ESSRAEEAKAEA) are compositionally biased toward basic and acidic residues. A compositionally biased stretch (acidic residues) spans 463-525 (PEEEEEEAAE…EAEGDGEEEG (63 aa)). The span at 526–544 (ESKGDEAAEEESEKKEKKK) shows a compositional bias: basic and acidic residues.

This sequence belongs to the intermediate filament family. As to quaternary structure, forms homodimers (in vitro).

The protein localises to the cell projection. It localises to the axon. The protein resides in the cytoplasm. Its subcellular location is the cytoskeleton. In terms of biological role, neurofilaments usually contain three intermediate filament proteins: NEFL, NEFM, and NEFH which are involved in the maintenance of neuronal caliber. May additionally cooperate with other neuronal intermediate filament proteins to form neuronal filamentous networks. This Xenopus laevis (African clawed frog) protein is Neurofilament light polypeptide (nefl).